The following is a 163-amino-acid chain: UPF0303 protein SAV_5210 (163 aa).

This sequence belongs to the UPF0303 family.

The chain is UPF0303 protein SAV_5210 from Streptomyces avermitilis (strain ATCC 31267 / DSM 46492 / JCM 5070 / NBRC 14893 / NCIMB 12804 / NRRL 8165 / MA-4680).